The chain runs to 134 residues: Small ribosomal subunit protein uS11 (134 aa).

Belongs to the universal ribosomal protein uS11 family. As to quaternary structure, part of the 30S ribosomal subunit. Interacts with proteins S7 and S18. Binds to IF-3.

Functionally, located on the platform of the 30S subunit, it bridges several disparate RNA helices of the 16S rRNA. Forms part of the Shine-Dalgarno cleft in the 70S ribosome. This chain is Small ribosomal subunit protein uS11, found in Acidovorax ebreus (strain TPSY) (Diaphorobacter sp. (strain TPSY)).